The following is a 275-amino-acid chain: Formamidopyrimidine-DNA glycosylase (275 aa).

Pro2 (schiff-base intermediate with DNA) is an active-site residue. Catalysis depends on Glu3, which acts as the Proton donor. The active-site Proton donor; for beta-elimination activity is the Lys60. 2 residues coordinate DNA: His93 and Arg112. The FPG-type zinc-finger motif lies at 240–274; the sequence is FVYGRKDEPCKKCGSPIEKTVVGGRGTHFCIKCQK. Catalysis depends on Arg264, which acts as the Proton donor; for delta-elimination activity.

Belongs to the FPG family. In terms of assembly, monomer. Zn(2+) serves as cofactor.

The catalysed reaction is Hydrolysis of DNA containing ring-opened 7-methylguanine residues, releasing 2,6-diamino-4-hydroxy-5-(N-methyl)formamidopyrimidine.. It catalyses the reaction 2'-deoxyribonucleotide-(2'-deoxyribose 5'-phosphate)-2'-deoxyribonucleotide-DNA = a 3'-end 2'-deoxyribonucleotide-(2,3-dehydro-2,3-deoxyribose 5'-phosphate)-DNA + a 5'-end 5'-phospho-2'-deoxyribonucleoside-DNA + H(+). Its function is as follows. Involved in base excision repair of DNA damaged by oxidation or by mutagenic agents. Acts as a DNA glycosylase that recognizes and removes damaged bases. Has a preference for oxidized purines, such as 7,8-dihydro-8-oxoguanine (8-oxoG). Has AP (apurinic/apyrimidinic) lyase activity and introduces nicks in the DNA strand. Cleaves the DNA backbone by beta-delta elimination to generate a single-strand break at the site of the removed base with both 3'- and 5'-phosphates. In Bacillus licheniformis (strain ATCC 14580 / DSM 13 / JCM 2505 / CCUG 7422 / NBRC 12200 / NCIMB 9375 / NCTC 10341 / NRRL NRS-1264 / Gibson 46), this protein is Formamidopyrimidine-DNA glycosylase.